The primary structure comprises 102 residues: Large ribosomal subunit protein bL21 (102 aa).

This sequence belongs to the bacterial ribosomal protein bL21 family. As to quaternary structure, part of the 50S ribosomal subunit. Contacts protein L20.

Its function is as follows. This protein binds to 23S rRNA in the presence of protein L20. The sequence is that of Large ribosomal subunit protein bL21 from Ehrlichia chaffeensis (strain ATCC CRL-10679 / Arkansas).